A 339-amino-acid chain; its full sequence is Type IV secretion system protein PtlH homolog (339 aa).

Belongs to the GSP E family.

The chain is Type IV secretion system protein PtlH homolog (ptlH) from Bordetella bronchiseptica (strain ATCC BAA-588 / NCTC 13252 / RB50) (Alcaligenes bronchisepticus).